The primary structure comprises 1647 residues: MSKKNQQISPVLDNIVTSLLQSLSDSDESVRSTVVNSLYEIGFRQPNFVLQVACDYINKNQKIDQTHRVKILNSILQILEQTRNQLTDALSLNLIAMSISEMTRDKEVVPDWQQVASSLLVSLGLRYPSQIMDELLKRFEPGTLPHYFVMKTLGDFISSNPIPTVPKIREILSRILPVLGTIKHDNFKWVFAAALGHFADAIVQYVANIDTAPDKSLTLYSFSSEFYPALELMFSKWLGTNHEKVRLVTIEAVGSICSILSVEQLESQIQKLVVGVLSMLKKEKDLLPVTHSLCCILEVCVKNDLKLQVNELLIPIMTTLHPLVCIVPDYSNPASTKTYNEVLRCFEVIGRGYSDVLISFLNQRLENRDLRSRAGSLSIIRHIVTRLDVELADKKPLILSAIKPLIQTEPSLFIKKYLAQIIIAMAPYGYLEMEGGLTLLEFIVKGSSWYQDSEIGKAQPTQPPKKIENPDLHVTDSELRLICDNILNLITTTMPQLESILWPYLFEFILPEQYTAAIPVVTKSLTYIALSKKSVDSDDYYIDFDKEINLPKPTQIIARYFVLLTAPLRRNQLGIRILENMKAIGPILHPSICDMWDVTLPKLISYLEDHTDIETWNKNQWEELVLRLLSETIKNAADDEWTVALGNSMSEQIDHYKKDPILKRSLYKQMGLIMQKCSHKEFVKSKIEVMFTSVDYTNSLENEGCAIGLGYCGASHFDIVLEKINFYIKNSMVKKSGFFGKKGPKGIKNCILLSLGYSATYAQSALFSSRVEVHVIQPIKPSILQLKKVPKKLSSIKMIDLIGKALHPNKASTFIFKQRDELMKLLISYMSTPPPSTNNQVKIDGTNACSTLVNLEPMISLELEVQIINLSLSFFNQQVSPANATNTDSDEYKEVNSLITSVNNLLSTILYNQTTIACLNRLIGYLDPLSRSKDAHIRERSLFCILYLVKKFIEYSTDSDSMPTDKLFDSIGTTLSVLIPRCTDPEINVRRYAVESIQLILYIGFMLKNATPDNRRVKPSEVLHPLTSIRDSITTTEVNEQFSLVFEISVIISKMISLEEIPKFLEGSIKGLQDLQAFSTNGSCIIINGLIKTRGEELIEYVPILVKGLLTAMEGITSETTMNGTLVSLRSLANHHLIPVLSVLLEYPMPHSVHVIKSFQIIAKDKNLISPTLIHLMDLLNNKPVYEEKPDPKNKNRIIPQPFAIALAATCSLGEIFQLTEVEEVVKYFYHQLISTLVLRAGTCNNSLPCLIEVASTNPKAKASAISLIPSQQMLVTFRQFFKCTKEEETLLAEIESKGSFSQLETPFYHQGIIEILSVVSSHHPDLIQGIFQYLLPYQRSNHLEHRIVTISVTTELINHCKDKELIQRLINTLLNSLVDPLVKLISLKGLSNIVSAGVEQTNRYAPTVIDALSTSIDDQDETMAMECMLGLSKIFEVADEGRVAPILVNICNRIRPAFEKPNDSIRAASFQLFGSLWRFGSGSACDPFYEQIHSSLPSLIMHLNDDVQSVKNSCKKTLFQLSTLMRSQDAMDYFNNKSKGFVGDNDQPNYEEFLLDFSKLLIINYPERVNYFVMTVIEFFKSTWVNLRGNAATFIGFILGNLTEDKRTQTNINSTILTKSLVGLLAEKSPAVRKKAAESLGLLHHY.

11 HEAT repeats span residues 9-47 (SPVL…RQPN), 65-103 (QTHR…SEMT), 224-262 (SEFY…ILSV), 351-389 (RGYS…RLDV), 597-635 (DVTL…TIKN), 968-1006 (FDSI…IGFM), 1131-1168 (SLAN…DKNL), 1364-1400 (KELI…AGVE), 1403-1441 (NRYA…VADE), 1490-1528 (YEQI…LMRS), and 1612-1647 (NINS…LHHY).

This sequence belongs to the MROH1 family. Homooligomer.

It localises to the lysosome membrane. Its function is as follows. Lysosome fission factor. This chain is Maestro heat-like repeat-containing protein family member 1 (mroh1), found in Dictyostelium discoideum (Social amoeba).